Here is a 205-residue protein sequence, read N- to C-terminus: LexA repressor (205 aa).

Residues 28 to 48 (RAEIAHKLGFRSANSAEEHLK) constitute a DNA-binding region (H-T-H motif). Active-site for autocatalytic cleavage activity residues include Ser122 and Lys159.

Belongs to the peptidase S24 family. In terms of assembly, homodimer.

The catalysed reaction is Hydrolysis of Ala-|-Gly bond in repressor LexA.. In terms of biological role, represses a number of genes involved in the response to DNA damage (SOS response), including recA and lexA. In the presence of single-stranded DNA, RecA interacts with LexA causing an autocatalytic cleavage which disrupts the DNA-binding part of LexA, leading to derepression of the SOS regulon and eventually DNA repair. This is LexA repressor from Idiomarina loihiensis (strain ATCC BAA-735 / DSM 15497 / L2-TR).